The sequence spans 283 residues: Shikimate kinase (283 aa).

Residue 86–96 participates in ATP binding; sequence PIKSGLSSSSA.

It belongs to the GHMP kinase family. Archaeal shikimate kinase subfamily.

It is found in the cytoplasm. The catalysed reaction is shikimate + ATP = 3-phosphoshikimate + ADP + H(+). It functions in the pathway metabolic intermediate biosynthesis; chorismate biosynthesis; chorismate from D-erythrose 4-phosphate and phosphoenolpyruvate: step 5/7. The polypeptide is Shikimate kinase (Methanococcus maripaludis (strain C6 / ATCC BAA-1332)).